The following is a 441-amino-acid chain: GTPase Der (441 aa).

EngA-type G domains lie at 4-168 (PVVA…PEDI) and 177-352 (IRIA…EQNS). GTP contacts are provided by residues 10 to 17 (GRPNVGKS), 57 to 61 (DTGGI), 121 to 124 (NKVE), 183 to 190 (GRPNVGKS), 230 to 234 (DTAGM), and 295 to 298 (NKWD). Positions 353–437 (TRVATATLNT…PIRMIVRQKD (85 aa)) constitute a KH-like domain.

This sequence belongs to the TRAFAC class TrmE-Era-EngA-EngB-Septin-like GTPase superfamily. EngA (Der) GTPase family. In terms of assembly, associates with the 50S ribosomal subunit.

Its function is as follows. GTPase that plays an essential role in the late steps of ribosome biogenesis. This Desulfitobacterium hafniense (strain Y51) protein is GTPase Der.